The primary structure comprises 235 residues: Leucyl/phenylalanyl-tRNA--protein transferase (235 aa).

Belongs to the L/F-transferase family.

Its subcellular location is the cytoplasm. It catalyses the reaction N-terminal L-lysyl-[protein] + L-leucyl-tRNA(Leu) = N-terminal L-leucyl-L-lysyl-[protein] + tRNA(Leu) + H(+). The catalysed reaction is N-terminal L-arginyl-[protein] + L-leucyl-tRNA(Leu) = N-terminal L-leucyl-L-arginyl-[protein] + tRNA(Leu) + H(+). The enzyme catalyses L-phenylalanyl-tRNA(Phe) + an N-terminal L-alpha-aminoacyl-[protein] = an N-terminal L-phenylalanyl-L-alpha-aminoacyl-[protein] + tRNA(Phe). Functions in the N-end rule pathway of protein degradation where it conjugates Leu, Phe and, less efficiently, Met from aminoacyl-tRNAs to the N-termini of proteins containing an N-terminal arginine or lysine. In Magnetococcus marinus (strain ATCC BAA-1437 / JCM 17883 / MC-1), this protein is Leucyl/phenylalanyl-tRNA--protein transferase.